Reading from the N-terminus, the 489-residue chain is WD repeat-containing protein JIP5 (489 aa).

The WD 1 repeat unit spans residues 4–45 (PLSSDALDLCFHPAAETNLLAVGLISGKIQLINYDDYLSSPS). A disordered region spans residues 46–66 (SSRTPLAPPSKKSKPSTISSA). Residues 124-163 (EVHDAAPSRVLPVDESLVVTGDDDGVVRLWDVRKGGGKGI) form a WD 2 repeat. The disordered stretch occupies residues 192 to 246 (SIKEAKKSKTQLKKQRRRARQAERLKEHDKEKREQNASDTEASEPDSEDDAAIKV). The segment covering 199 to 210 (SKTQLKKQRRRA) has biased composition (basic residues). The span at 211–227 (RQAERLKEHDKEKREQN) shows a compositional bias: basic and acidic residues. Residues 232–241 (EASEPDSEDD) are compositionally biased toward acidic residues. WD repeat units follow at residues 279–318 (DQED…LDHV) and 323–363 (GHPA…GVIA). Positions 417 to 489 (IVGLAEDDSD…AGKGGFFSDL (73 aa)) are disordered. Acidic residues-rich tracts occupy residues 421 to 440 (AEDD…DDDD) and 449 to 472 (DGAE…DSED).

It belongs to the WD repeat WDR55 family.

It is found in the nucleus. It localises to the nucleolus. In Mycosarcoma maydis (Corn smut fungus), this protein is WD repeat-containing protein JIP5 (JIP5).